The primary structure comprises 125 residues: Fluoride-specific ion channel FluC (125 aa).

Transmembrane regions (helical) follow at residues 6-26, 34-54, 68-88, and 98-118; these read GFIALAGAAGTLARYWLSGLV, FPWGTAVVNILGCFLFGLVWE, AVLLTGFMGAFTTFSTFIFES, and LALLANLGFQTILGFAALFAG. Positions 76 and 79 each coordinate Na(+).

The protein belongs to the fluoride channel Fluc/FEX (TC 1.A.43) family.

It is found in the cell inner membrane. The enzyme catalyses fluoride(in) = fluoride(out). Its activity is regulated as follows. Na(+) is not transported, but it plays an essential structural role and its presence is essential for fluoride channel function. Functionally, fluoride-specific ion channel. Important for reducing fluoride concentration in the cell, thus reducing its toxicity. This chain is Fluoride-specific ion channel FluC, found in Solidesulfovibrio magneticus (strain ATCC 700980 / DSM 13731 / RS-1) (Desulfovibrio magneticus).